Here is a 262-residue protein sequence, read N- to C-terminus: Octopine permease ATP-binding protein P (262 aa).

Residues 9–254 enclose the ABC transporter domain; the sequence is VQLKDIRKNF…PRTDRFRQFL (246 aa). 41 to 48 is a binding site for ATP; that stretch reads GSSGSGKS.

This sequence belongs to the ABC transporter superfamily.

It is found in the cell inner membrane. Its function is as follows. Component of the octopine active transport system probably consisting of four subunits: Q, M, P and T. The chain is Octopine permease ATP-binding protein P (occP) from Rhizobium radiobacter (Agrobacterium tumefaciens).